Here is a 208-residue protein sequence, read N- to C-terminus: Small ribosomal subunit protein uS4 (208 aa).

An S4 RNA-binding domain is found at 98–159 (LRLDNVVFRL…RSKKVVRITE (62 aa)).

This sequence belongs to the universal ribosomal protein uS4 family. In terms of assembly, part of the 30S ribosomal subunit. Contacts protein S5. The interaction surface between S4 and S5 is involved in control of translational fidelity.

Functionally, one of the primary rRNA binding proteins, it binds directly to 16S rRNA where it nucleates assembly of the body of the 30S subunit. In terms of biological role, with S5 and S12 plays an important role in translational accuracy. The polypeptide is Small ribosomal subunit protein uS4 (Anaeromyxobacter dehalogenans (strain 2CP-1 / ATCC BAA-258)).